Here is a 487-residue protein sequence, read N- to C-terminus: NAD-dependent histone deacetylase HST3 (487 aa).

Residues 15–336 form the Deacetylase sirtuin-type domain; it reads PADTSIKLHE…FLTQEQLDSE (322 aa). NAD(+) is bound by residues 40-59 and 129-132; these read GAGI…DGLY and QNID. The active-site Proton acceptor is the histidine 167. Zn(2+)-binding residues include cysteine 175, cysteine 178, cysteine 200, and cysteine 203. Residues 261 to 263, 291 to 293, and cysteine 312 contribute to the NAD(+) site; these read GTS and NKT. Residues 397–406 are compositionally biased toward basic and acidic residues; that stretch reads VESVSVKEEP. Residues 397–487 are disordered; the sequence is VESVSVKEEP…ARKGITLDQH (91 aa). Basic residues predominate over residues 415-425; that stretch reads HKPKQATKLKR. Residues 448-459 are compositionally biased toward polar residues; it reads DQLSSPASSING.

Belongs to the sirtuin family. Class I subfamily. It depends on Zn(2+) as a cofactor.

The protein resides in the cytoplasm. Its subcellular location is the nucleus. The enzyme catalyses N(6)-acetyl-L-lysyl-[protein] + NAD(+) + H2O = 2''-O-acetyl-ADP-D-ribose + nicotinamide + L-lysyl-[protein]. NAD-dependent histone deacetylase, which could function in telomeric silencing, cell cycle progression and chromosome stability. The polypeptide is NAD-dependent histone deacetylase HST3 (HST3) (Candida albicans (strain SC5314 / ATCC MYA-2876) (Yeast)).